The primary structure comprises 99 residues: DNA-binding protein Fis (99 aa).

A DNA-binding region (H-T-H motif) is located at residues 75-94 (QTRAASIMGINRSTLRKKLK).

The protein belongs to the transcriptional regulatory Fis family. As to quaternary structure, homodimer.

Activates ribosomal RNA transcription. Plays a direct role in upstream activation of rRNA promoters. The chain is DNA-binding protein Fis from Buchnera aphidicola subsp. Schizaphis graminum (strain Sg).